A 141-amino-acid polypeptide reads, in one-letter code: uncharacterized protein (141 aa).

Residues 114–134 (ILFTCYIQSFSLLISNFFIAI) form a helical membrane-spanning segment.

It is found in the membrane. This is an uncharacterized protein from Schizosaccharomyces pombe (strain 972 / ATCC 24843) (Fission yeast).